A 201-amino-acid chain; its full sequence is Small ribosomal subunit protein uS4c (201 aa).

The S4 RNA-binding domain maps to 89-150; the sequence is MRLDNILFRL…KQRSKVLIQN (62 aa).

Belongs to the universal ribosomal protein uS4 family. As to quaternary structure, part of the 30S ribosomal subunit. Contacts protein S5. The interaction surface between S4 and S5 is involved in control of translational fidelity.

It localises to the plastid. It is found in the chloroplast. Its function is as follows. One of the primary rRNA binding proteins, it binds directly to 16S rRNA where it nucleates assembly of the body of the 30S subunit. Functionally, with S5 and S12 plays an important role in translational accuracy. This is Small ribosomal subunit protein uS4c (rps4) from Dioscorea elephantipes (Elephant's foot yam).